A 396-amino-acid polypeptide reads, in one-letter code: Putative nickel insertion protein (396 aa).

This sequence belongs to the LarC family.

This chain is Putative nickel insertion protein, found in Methanococcoides burtonii (strain DSM 6242 / NBRC 107633 / OCM 468 / ACE-M).